A 733-amino-acid polypeptide reads, in one-letter code: Polyribonucleotide nucleotidyltransferase (733 aa).

Residues 404-424 form a disordered region; sequence NYNMPPYSTGETGRVGSPKRR. The Mg(2+) site is built by D516 and D522. The KH domain maps to 582 to 641; it reads PRIITVHIPVDKIGEVIGPKGKMINQIQDDTGANISIEDDGTIFIGADNGDSAESARSMI. The S1 motif domain maps to 653–725; the sequence is GERYLGTVVK…DRGKLSLVLA (73 aa).

It belongs to the polyribonucleotide nucleotidyltransferase family. It depends on Mg(2+) as a cofactor.

The protein localises to the cytoplasm. It catalyses the reaction RNA(n+1) + phosphate = RNA(n) + a ribonucleoside 5'-diphosphate. Its function is as follows. Involved in mRNA degradation. Catalyzes the phosphorolysis of single-stranded polyribonucleotides processively in the 3'- to 5'-direction. The polypeptide is Polyribonucleotide nucleotidyltransferase (Cutibacterium acnes (strain DSM 16379 / KPA171202) (Propionibacterium acnes)).